The sequence spans 208 residues: Small ribosomal subunit protein bS6 (208 aa).

2 disordered regions span residues 121-143 (SENN…KPRL) and 185-208 (NQQT…GAKP). The span at 185 to 195 (NQQTSQANNNQ) shows a compositional bias: low complexity.

The protein belongs to the bacterial ribosomal protein bS6 family.

Binds together with bS18 to 16S ribosomal RNA. This chain is Small ribosomal subunit protein bS6 (rpsF), found in Mycoplasma genitalium (strain ATCC 33530 / DSM 19775 / NCTC 10195 / G37) (Mycoplasmoides genitalium).